The chain runs to 232 residues: RNA chaperone ProQ (232 aa).

Positions 105–182 are disordered; sequence EAKARVQAQR…REEQHTPVSD (78 aa). The span at 117-136 shows a compositional bias: basic and acidic residues; sequence QQAKKREAAAAAGEKEDAPR. A compositionally biased stretch (basic residues) spans 137-146; that stretch reads RERKPRPTTP. Basic and acidic residues predominate over residues 147–177; it reads RRKEGAERKPRAQKPVEKAPKTVKAPREEQH.

This sequence belongs to the ProQ family.

The protein localises to the cytoplasm. In terms of biological role, RNA chaperone with significant RNA binding, RNA strand exchange and RNA duplexing activities. May regulate ProP activity through an RNA-based, post-transcriptional mechanism. The sequence is that of RNA chaperone ProQ from Escherichia coli (strain ATCC 8739 / DSM 1576 / NBRC 3972 / NCIMB 8545 / WDCM 00012 / Crooks).